A 99-amino-acid polypeptide reads, in one-letter code: Nucleoid-associated protein SAG1747 (99 aa).

Residues 1-10 are compositionally biased toward low complexity; it reads MMNMQNMMRQ. The segment at 1 to 20 is disordered; the sequence is MMNMQNMMRQAQKLQKQMEQ.

It belongs to the YbaB/EbfC family. Homodimer.

The protein resides in the cytoplasm. The protein localises to the nucleoid. Binds to DNA and alters its conformation. May be involved in regulation of gene expression, nucleoid organization and DNA protection. The sequence is that of Nucleoid-associated protein SAG1747 from Streptococcus agalactiae serotype V (strain ATCC BAA-611 / 2603 V/R).